We begin with the raw amino-acid sequence, 274 residues long: Phosphatidylglycerol--prolipoprotein diacylglyceryl transferase (274 aa).

The next 4 membrane-spanning stretches (helical) occupy residues 19–39 (VGSV…VLGL), 59–79 (LAIW…VLFQ), 93–113 (IWRG…AALI), and 120–140 (VSFW…QAIG). Residue R141 participates in a 1,2-diacyl-sn-glycero-3-phospho-(1'-sn-glycerol) binding. The next 3 helical transmembrane spans lie at 181–201 (TFLY…ALFF), 209–229 (GTIF…IEGL), and 243–263 (QVVS…LYLL).

This sequence belongs to the Lgt family.

Its subcellular location is the cell inner membrane. It catalyses the reaction L-cysteinyl-[prolipoprotein] + a 1,2-diacyl-sn-glycero-3-phospho-(1'-sn-glycerol) = an S-1,2-diacyl-sn-glyceryl-L-cysteinyl-[prolipoprotein] + sn-glycerol 1-phosphate + H(+). It participates in protein modification; lipoprotein biosynthesis (diacylglyceryl transfer). Catalyzes the transfer of the diacylglyceryl group from phosphatidylglycerol to the sulfhydryl group of the N-terminal cysteine of a prolipoprotein, the first step in the formation of mature lipoproteins. This is Phosphatidylglycerol--prolipoprotein diacylglyceryl transferase from Acaryochloris marina (strain MBIC 11017).